The sequence spans 445 residues: Tubulin beta-2 chain (445 aa).

Gln-11, Glu-69, Ser-138, Gly-142, Thr-143, Gly-144, Asn-204, and Asn-226 together coordinate GTP. Residue Glu-69 coordinates Mg(2+). The interval 424–445 is disordered; it reads QYQDATAEDEGEFDEDEEVEEA. Residues 429–445 are compositionally biased toward acidic residues; sequence TAEDEGEFDEDEEVEEA.

This sequence belongs to the tubulin family. As to quaternary structure, dimer of alpha and beta chains. A typical microtubule is a hollow water-filled tube with an outer diameter of 25 nm and an inner diameter of 15 nM. Alpha-beta heterodimers associate head-to-tail to form protofilaments running lengthwise along the microtubule wall with the beta-tubulin subunit facing the microtubule plus end conferring a structural polarity. Microtubules usually have 13 protofilaments but different protofilament numbers can be found in some organisms and specialized cells. Requires Mg(2+) as cofactor.

The protein resides in the cytoplasm. Its subcellular location is the cytoskeleton. Its function is as follows. Tubulin is the major constituent of microtubules, a cylinder consisting of laterally associated linear protofilaments composed of alpha- and beta-tubulin heterodimers. Microtubules grow by the addition of GTP-tubulin dimers to the microtubule end, where a stabilizing cap forms. Below the cap, tubulin dimers are in GDP-bound state, owing to GTPase activity of alpha-tubulin. This chain is Tubulin beta-2 chain (TUB-2), found in Echinococcus multilocularis (Fox tapeworm).